The following is a 225-amino-acid chain: DNA-binding response regulator MtrA (225 aa).

The Response regulatory domain occupies 4-117; that stretch reads RILVVDDDAS…ELVARVRARL (114 aa). At aspartate 53 the chain carries 4-aspartylphosphate. Residues 125-224 constitute a DNA-binding region (ompR/PhoB-type); it reads AEMLSIADVD…VRGVGYKAGP (100 aa).

In terms of processing, phosphorylated by MtrB.

Member of the two-component regulatory system MtrA/MtrB. This chain is DNA-binding response regulator MtrA (mtrA), found in Mycobacterium leprae (strain TN).